A 129-amino-acid polypeptide reads, in one-letter code: Small ribosomal subunit protein bS18c (129 aa).

Residues 1–20 (MGTSNTQKPQKQVPKRKKYK) form a disordered region.

Belongs to the bacterial ribosomal protein bS18 family. In terms of assembly, part of the 30S ribosomal subunit.

The protein resides in the plastid. It is found in the chloroplast. The sequence is that of Small ribosomal subunit protein bS18c from Stigeoclonium helveticum (Green alga).